Reading from the N-terminus, the 77-residue chain is Omega-conotoxin-like 6 (77 aa).

The first 22 residues, 1–22, serve as a signal peptide directing secretion; the sequence is MKLTCVVIIAVLLLTACQLITA. The propeptide occupies 23–50; sequence DDSRGVQKHRSLRSTTKVSKSTSCMEAG. 3 disulfide bridges follow: cysteine 46–cysteine 61, cysteine 53–cysteine 64, and cysteine 60–cysteine 71.

The protein belongs to the conotoxin O1 superfamily. As to expression, expressed by the venom duct.

Its subcellular location is the secreted. In terms of biological role, omega-conotoxins act at presynaptic membranes, they bind and block voltage-gated calcium channels (Cav). The sequence is that of Omega-conotoxin-like 6 from Conus striatus (Striated cone).